Consider the following 185-residue polypeptide: Ribosome-recycling factor (185 aa).

The protein belongs to the RRF family.

The protein resides in the cytoplasm. Responsible for the release of ribosomes from messenger RNA at the termination of protein biosynthesis. May increase the efficiency of translation by recycling ribosomes from one round of translation to another. The polypeptide is Ribosome-recycling factor (Parafrankia sp. (strain EAN1pec)).